The sequence spans 51 residues: Large ribosomal subunit protein bL33 (51 aa).

The interval 1–23 (MRDKIKLESSAGTGHFYTTTKNK) is disordered. Positions 10–20 (SAGTGHFYTTT) are enriched in polar residues.

This sequence belongs to the bacterial ribosomal protein bL33 family.

The sequence is that of Large ribosomal subunit protein bL33 from Chromobacterium violaceum (strain ATCC 12472 / DSM 30191 / JCM 1249 / CCUG 213 / NBRC 12614 / NCIMB 9131 / NCTC 9757 / MK).